The sequence spans 550 residues: CTP synthase (550 aa).

Residues 1–267 (MKTKFIFITG…DQKIAIMLRL (267 aa)) form an amidoligase domain region. Serine 14 contacts CTP. Residue serine 14 participates in UTP binding. Residues 15 to 20 (SLGKGL) and aspartate 72 contribute to the ATP site. Residues aspartate 72 and glutamate 141 each contribute to the Mg(2+) site. Residues 148–150 (DIE), 188–193 (KTKPTQ), and lysine 224 contribute to the CTP site. Residues 188–193 (KTKPTQ) and lysine 224 contribute to the UTP site. In terms of domain architecture, Glutamine amidotransferase type-1 spans 292-545 (TIGIVGKYVD…IKAAKKEAMG (254 aa)). Glycine 354 contributes to the L-glutamine binding site. The active-site Nucleophile; for glutamine hydrolysis is cysteine 381. L-glutamine-binding positions include 382–385 (LGMQ), glutamate 405, and arginine 473. Catalysis depends on residues histidine 518 and glutamate 520.

It belongs to the CTP synthase family. In terms of assembly, homotetramer.

It carries out the reaction UTP + L-glutamine + ATP + H2O = CTP + L-glutamate + ADP + phosphate + 2 H(+). It catalyses the reaction L-glutamine + H2O = L-glutamate + NH4(+). The catalysed reaction is UTP + NH4(+) + ATP = CTP + ADP + phosphate + 2 H(+). Its pathway is pyrimidine metabolism; CTP biosynthesis via de novo pathway; CTP from UDP: step 2/2. Its activity is regulated as follows. Allosterically activated by GTP, when glutamine is the substrate; GTP has no effect on the reaction when ammonia is the substrate. The allosteric effector GTP functions by stabilizing the protein conformation that binds the tetrahedral intermediate(s) formed during glutamine hydrolysis. Inhibited by the product CTP, via allosteric rather than competitive inhibition. Catalyzes the ATP-dependent amination of UTP to CTP with either L-glutamine or ammonia as the source of nitrogen. Regulates intracellular CTP levels through interactions with the four ribonucleotide triphosphates. This is CTP synthase from Nitratidesulfovibrio vulgaris (strain DSM 19637 / Miyazaki F) (Desulfovibrio vulgaris).